The sequence spans 345 residues: Pectin lyase (345 aa).

Positions methionine 1–glycine 24 are cleaved as a signal peptide. The active site involves arginine 234.

Belongs to the polysaccharide lyase 1 family.

It is found in the secreted. The enzyme catalyses Eliminative cleavage of (1-&gt;4)-alpha-D-galacturonan methyl ester to give oligosaccharides with 4-deoxy-6-O-methyl-alpha-D-galact-4-enuronosyl groups at their non-reducing ends.. With respect to regulation, inhibited by Hg(2+) and Mn(2+). Not affected by EDTA in vitro. Catalyzes the depolymerization of pectins of methyl esterification degree from 13 to 75%, with an endo mode of action. Cannot degrade polygalacturonate. Also displays protopectinase activity, i.e. releases pectin from protopectin. The chain is Pectin lyase (pelB) from Bacillus subtilis.